The sequence spans 156 residues: Ribosomal RNA large subunit methyltransferase H (156 aa).

S-adenosyl-L-methionine-binding positions include Leu-73, Gly-104, and 123–128; that span reads VSSLTL.

This sequence belongs to the RNA methyltransferase RlmH family. In terms of assembly, homodimer.

The protein localises to the cytoplasm. The catalysed reaction is pseudouridine(1915) in 23S rRNA + S-adenosyl-L-methionine = N(3)-methylpseudouridine(1915) in 23S rRNA + S-adenosyl-L-homocysteine + H(+). Functionally, specifically methylates the pseudouridine at position 1915 (m3Psi1915) in 23S rRNA. In Paraburkholderia phymatum (strain DSM 17167 / CIP 108236 / LMG 21445 / STM815) (Burkholderia phymatum), this protein is Ribosomal RNA large subunit methyltransferase H.